The chain runs to 104 residues: Flagellar hook-basal body complex protein FliE (104 aa).

Belongs to the FliE family.

It is found in the bacterial flagellum basal body. This chain is Flagellar hook-basal body complex protein FliE, found in Enterobacter sp. (strain 638).